Consider the following 396-residue polypeptide: S-adenosylmethionine synthase (396 aa).

H16 contacts ATP. D18 lines the Mg(2+) pocket. E44 contacts K(+). E57 and Q100 together coordinate L-methionine. The tract at residues 100–110 (QSPDINQGVDR) is flexible loop. Residues 165–167 (DAK), D240, 246–247 (RK), A263, and K267 contribute to the ATP site. D240 is a binding site for L-methionine. K271 contributes to the L-methionine binding site.

Belongs to the AdoMet synthase family. Homotetramer; dimer of dimers. Mg(2+) serves as cofactor. It depends on K(+) as a cofactor.

The protein localises to the cytoplasm. The catalysed reaction is L-methionine + ATP + H2O = S-adenosyl-L-methionine + phosphate + diphosphate. It participates in amino-acid biosynthesis; S-adenosyl-L-methionine biosynthesis; S-adenosyl-L-methionine from L-methionine: step 1/1. In terms of biological role, catalyzes the formation of S-adenosylmethionine (AdoMet) from methionine and ATP. The overall synthetic reaction is composed of two sequential steps, AdoMet formation and the subsequent tripolyphosphate hydrolysis which occurs prior to release of AdoMet from the enzyme. This chain is S-adenosylmethionine synthase, found in Pseudomonas fluorescens (strain Pf0-1).